Reading from the N-terminus, the 388-residue chain is L-cysteine desulfidase (388 aa).

Residue Cys25 is the Proton acceptor of the active site. Positions 282, 322, and 329 each coordinate [4Fe-4S] cluster.

It belongs to the L-cysteine desulfidase family. In terms of assembly, homotrimer. [4Fe-4S] cluster serves as cofactor.

It carries out the reaction L-cysteine + H2O = hydrogen sulfide + pyruvate + NH4(+) + H(+). In terms of biological role, catalyzes the cleavage of L-cysteine to form 2-aminoprop-2-enoate and sulfide. The former then spontaneously hydrolyzes to pyruvate and NH(3). May be responsible for the production of sulfide required for the biosynthesis of iron-sulfur centers in this archaea. Is very specific for L-cysteine, with no activity being detected with D-cysteine, L-homocysteine, 3-mercaptopropionate (cysteine without the amino group), cysteamine (cysteine without the carboxylate), or mercaptolactate (the hydroxyl analog of cysteine). The sequence is that of L-cysteine desulfidase from Methanocaldococcus jannaschii (strain ATCC 43067 / DSM 2661 / JAL-1 / JCM 10045 / NBRC 100440) (Methanococcus jannaschii).